The following is a 355-amino-acid chain: Nicotinate-nucleotide--dimethylbenzimidazole phosphoribosyltransferase (355 aa).

The active-site Proton acceptor is Glu321.

The protein belongs to the CobT family.

The catalysed reaction is 5,6-dimethylbenzimidazole + nicotinate beta-D-ribonucleotide = alpha-ribazole 5'-phosphate + nicotinate + H(+). It participates in nucleoside biosynthesis; alpha-ribazole biosynthesis; alpha-ribazole from 5,6-dimethylbenzimidazole: step 1/2. In terms of biological role, catalyzes the synthesis of alpha-ribazole-5'-phosphate from nicotinate mononucleotide (NAMN) and 5,6-dimethylbenzimidazole (DMB). This Desulfotalea psychrophila (strain LSv54 / DSM 12343) protein is Nicotinate-nucleotide--dimethylbenzimidazole phosphoribosyltransferase.